The chain runs to 355 residues: 6-aminohexanoate-oligomer endohydrolase (355 aa).

Thr267 serves as the catalytic Nucleophile.

It belongs to the peptidase S58 family. Heterotetramer composed of 4 alpha/beta heterodimers. Exists at the monomer/dimer/trimer equilibrium in aqueous solution. Expressed as an inactive precursor that is cleaved autocatalytically at Asn266/Thr267 to generate an active enzyme composed of an alpha subunit and a beta subunit.

It catalyses the reaction [N-(6-aminohexanoyl)]n + H2O = [N-(6-aminohexanoyl)]n-x + [N-(6-aminohexanoyl)]x.. It participates in xenobiotic degradation; nylon-6 oligomer degradation. In terms of biological role, involved in the degradation of nylon-6 oligomers. Degrades cyclic and linear oligomers of 6-aminohexanoate (Ahx) with a degree of polymerization greater than three by an endo-type mode. Cannot use Ahx cyclic dimer or the Ahx linear dimer. In Paenarthrobacter ureafaciens, this protein is 6-aminohexanoate-oligomer endohydrolase.